The chain runs to 283 residues: DegV domain-containing protein lmo2514 (283 aa).

In terms of domain architecture, DegV spans 5 to 282 (IAVVTDSTTY…EGALGLTWSI (278 aa)). Positions 63 and 96 each coordinate hexadecanoate.

May bind long-chain fatty acids, such as palmitate, and may play a role in lipid transport or fatty acid metabolism. The polypeptide is DegV domain-containing protein lmo2514 (Listeria monocytogenes serovar 1/2a (strain ATCC BAA-679 / EGD-e)).